The sequence spans 199 residues: Nitrile hydratase subunit alpha (199 aa).

4 residues coordinate Fe(3+): C102, C105, S106, and C107. C105 bears the Cysteine sulfinic acid (-SO2H) mark. At C107 the chain carries Cysteine sulfenic acid (-SOH).

Belongs to the nitrile hydratase subunit alpha family. In terms of assembly, heterodimer of an alpha and a beta chain. Requires Fe(3+) as cofactor. In terms of processing, oxidation on Cys-105 is essential for the activity. Oxidation on Cys-107 stabilizes the Fe-NO ligand coordinated in the inactive form.

It carries out the reaction an aliphatic primary amide = an aliphatic nitrile + H2O. With respect to regulation, inactivated by oxidation of Cys-107 to a sulfenic acid. NHase catalyzes the hydration of various nitrile compounds to the corresponding amides. Industrial production of acrylamide is now being developed using some of the enzymes of this class. This Rhodococcus sp protein is Nitrile hydratase subunit alpha (nthA).